The primary structure comprises 343 residues: Probable dolichyl-diphosphooligosaccharide--protein glycosyltransferase subunit 3A (343 aa).

An N-terminal signal peptide occupies residues 1-22 (MVIQTNLSYRFFILIVFLFTLA). At 23–185 (NPKSDSDLKN…TVCSIQRPPL (163 aa)) the chain is on the lumenal side. Residues Asn105, Asn108, and Asn146 are each glycosylated (N-linked (GlcNAc...) asparagine). A helical transmembrane segment spans residues 186 to 206 (ISKTQIGIIVAIIIISTPILI). The Cytoplasmic portion of the chain corresponds to 207 to 220 (KKILKGETLLHDHR). A helical transmembrane segment spans residues 221 to 241 (IWLVGAVFVYFFSVSGTMHNI). Topologically, residues 242–273 (IREMPMYIKDYEDSSKFVFFIEESEMQLGAEG) are lumenal. A helical membrane pass occupies residues 274-294 (FFVGFLYTVVGLLLAFVTNVV). The Cytoplasmic portion of the chain corresponds to 295–304 (VRVKKLDEQR). A helical transmembrane segment spans residues 305–325 (MAMLLALSISFWAVRKVVYLD). Over 326-343 (NWKTGYEIYPYWPSSWRG) the chain is Lumenal.

Belongs to the OST3/OST6 family. Component of the oligosaccharyltransferase (OST) complex.

The protein localises to the endoplasmic reticulum membrane. Its function is as follows. Subunit of the oligosaccharyl transferase (OST) complex that catalyzes the initial transfer of a defined glycan (Glc(3)Man(9)GlcNAc(2) in eukaryotes) from the lipid carrier dolichol-pyrophosphate to an asparagine residue within an Asn-X-Ser/Thr consensus motif in nascent polypeptide chains, the first step in protein N-glycosylation. N-glycosylation occurs cotranslationally and the complex associates with the Sec61 complex at the channel-forming translocon complex that mediates protein translocation across the endoplasmic reticulum (ER). All subunits are required for a maximal enzyme activity. The sequence is that of Probable dolichyl-diphosphooligosaccharide--protein glycosyltransferase subunit 3A (OST3A) from Arabidopsis thaliana (Mouse-ear cress).